Consider the following 806-residue polypeptide: Glycerol-3-phosphate acyltransferase (806 aa).

The short motif at 305-310 (CHRSHM) is the HXXXXD motif element.

The protein belongs to the GPAT/DAPAT family.

Its subcellular location is the cell inner membrane. The enzyme catalyses sn-glycerol 3-phosphate + an acyl-CoA = a 1-acyl-sn-glycero-3-phosphate + CoA. The protein operates within phospholipid metabolism; CDP-diacylglycerol biosynthesis; CDP-diacylglycerol from sn-glycerol 3-phosphate: step 1/3. The polypeptide is Glycerol-3-phosphate acyltransferase (Salmonella agona (strain SL483)).